The following is a 34-amino-acid chain: Ribonuclease PL1 (34 aa).

A glycan (N-linked (GlcNAc...) asparagine; partial) is linked at N4. H15 functions as the Proton acceptor in the catalytic mechanism.

The protein belongs to the pancreatic ribonuclease family.

Its subcellular location is the lysosome. The enzyme catalyses an [RNA] containing cytidine + H2O = an [RNA]-3'-cytidine-3'-phosphate + a 5'-hydroxy-ribonucleotide-3'-[RNA].. It carries out the reaction an [RNA] containing uridine + H2O = an [RNA]-3'-uridine-3'-phosphate + a 5'-hydroxy-ribonucleotide-3'-[RNA].. The polypeptide is Ribonuclease PL1 (Sus scrofa (Pig)).